The chain runs to 476 residues: Tubulointerstitial nephritis antigen (476 aa).

The N-linked (GlcNAc...) asparagine glycan is linked to N38. One can recognise an SMB domain in the interval 59–107; sequence NFGCCEDRDDGCVTEFYAANALCYCDKFCDRENSDCCPDYKSFCREEKE. Cystine bridges form between C63/C70, C70/C102, C81/C83, C81/C95, C87/C94, and C95/C102. 4 N-linked (GlcNAc...) asparagine glycosylation sites follow: N175, N314, N360, and N455.

The protein belongs to the peptidase C1 family. Post-translationally, it has been suggested that the active SMB domain may be permitted considerable disulfide bond heterogeneity or variability, thus 2 alternate disulfide patterns based on 3D structures are described with 1 disulfide bond conserved in both. As to expression, expressed in the kidney cortex, small intestine and cornea.

The protein resides in the secreted. It is found in the extracellular space. The protein localises to the extracellular matrix. It localises to the basement membrane. Its function is as follows. Mediates adhesion of proximal tubule epithelial cells via integrins alpha3-beta1 and alphaV-beta3. This is a non catalytic peptidase C1 family protein. This Homo sapiens (Human) protein is Tubulointerstitial nephritis antigen (TINAG).